A 282-amino-acid polypeptide reads, in one-letter code: Putative glycosyltransferase HI_0765 (282 aa).

The protein belongs to the glycosyltransferase 25 family.

The sequence is that of Putative glycosyltransferase HI_0765 from Haemophilus influenzae (strain ATCC 51907 / DSM 11121 / KW20 / Rd).